The sequence spans 396 residues: Phosphoglycerate kinase (396 aa).

Residues 21 to 23 (DFN), R36, 59 to 62 (HLGR), R119, and R156 each bind substrate. ATP contacts are provided by residues K207, E325, and 352–355 (GGDS).

It belongs to the phosphoglycerate kinase family. In terms of assembly, monomer.

The protein resides in the cytoplasm. The enzyme catalyses (2R)-3-phosphoglycerate + ATP = (2R)-3-phospho-glyceroyl phosphate + ADP. It functions in the pathway carbohydrate degradation; glycolysis; pyruvate from D-glyceraldehyde 3-phosphate: step 2/5. The protein is Phosphoglycerate kinase of Lacticaseibacillus casei (strain BL23) (Lactobacillus casei).